The primary structure comprises 353 residues: Cyclic GMP-AMP synthase-like receptor (353 aa).

Residues Ser-60 and 72-74 (EYD) each bind ATP. Glu-72, Asp-74, and Asp-183 together coordinate Mg(2+). Asp-183 is a GTP binding site. Residue Lys-245 participates in ATP binding. Residues Leu-269 and Glu-270 each coordinate Mn(2+).

Belongs to the mab-21 family. Mg(2+) is required as a cofactor. It depends on Mn(2+) as a cofactor.

It carries out the reaction GTP + ATP = 2',3'-cGAMP + 2 diphosphate. It catalyses the reaction GTP + ATP = pppGp(2'-5')A + diphosphate. The catalysed reaction is pppGp(2'-5')A = 2',3'-cGAMP + diphosphate. In terms of biological role, nucleotidyltransferase that catalyzes the formation of cyclic GMP-AMP (2',3'-cGAMP) from ATP and GTP and plays a key role in innate immunity. Acts as a key sensor of double-stranded RNA (dsRNA), the presence of dsRNA in the cytoplasm being a danger signal that triggers the immune responses. Directly binds dsRNA, activating the nucleotidyltransferase activity, leading to synthesis of 2',3'-cGAMP, a second messenger that binds to and activates Sting, thereby triggering the immune response via activation of the NF-kappa-B transcription factor. This Nicrophorus vespilloides (Boreal carrion beetle) protein is Cyclic GMP-AMP synthase-like receptor.